Consider the following 423-residue polypeptide: uncharacterized protein (423 aa).

The protein belongs to the asfivirus E423R family.

The protein resides in the virion. This is an uncharacterized protein from Ornithodoros (relapsing fever ticks).